The sequence spans 474 residues: Synaptotagmin-15B (474 aa).

Disordered regions lie at residues 1–62 (MGVV…AASG) and 75–128 (PRAA…PPAV). Over residues 75–88 (PRAAAGHQQHHGPP) the composition is skewed to low complexity. 2 C2 domains span residues 200 to 317 (CLGR…RRVI) and 331 to 452 (EFGD…EHWD).

The protein belongs to the synaptotagmin family.

The protein is Synaptotagmin-15B of Homo sapiens (Human).